We begin with the raw amino-acid sequence, 390 residues long: Alpha-2B adrenergic receptor (390 aa).

Residues 1-25 (AIATVITFLILFTIFGNSLVILAVL) traverse the membrane as a helical segment. At 26–36 (TSRSLRAPQNL) the chain is on the cytoplasmic side. A helical transmembrane segment spans residues 37–62 (FLVSLAAADIMVATLIIPFSLANELL). At 63–72 (GYWYFRRTWC) the chain is on the extracellular side. A disulfide bridge connects residues Cys72 and Cys151. Residues 73–95 (EVYLALDVLFCTSSIVHLCAISL) traverse the membrane as a helical segment. At 96–117 (DRYWAVSRALEYNSKRTPRRIK) the chain is on the cytoplasmic side. The helical transmembrane segment at 118 to 140 (CIILTVWLIAAAISLPPLIYKGD) threads the bilayer. At 141–156 (QGPQPRGRPQCKLNQE) the chain is on the extracellular side. The helical transmembrane segment at 157-180 (AWYILSSSIGSFFAPCLIMILVYL) threads the bilayer. Residues 181–354 (RIYLIAKRSH…LTREKRFTFV (174 aa)) lie on the Cytoplasmic side of the membrane. Disordered stretches follow at residues 191–218 (RRGP…PSAL) and 233–311 (EANG…PLQQ). The span at 280 to 292 (LEEEADKEEEEEC) shows a compositional bias: acidic residues. Residues 355 to 378 (LAVVIGVFVLCWFPFFFSYSLGAI) traverse the membrane as a helical segment. Residues 379-390 (CPQHCKVPHGLF) lie on the Extracellular side of the membrane.

This sequence belongs to the G-protein coupled receptor 1 family. Adrenergic receptor subfamily. ADRA2B sub-subfamily. Interacts with RAB26. Interacts with PPP1R9B. Interacts with GGA1, GGA2 and GGA3.

The protein localises to the cell membrane. Functionally, alpha-2 adrenergic receptors mediate the catecholamine-induced inhibition of adenylate cyclase through the action of G proteins. This chain is Alpha-2B adrenergic receptor (ADRA2B), found in Dugong dugon (Dugong).